Consider the following 336-residue polypeptide: NADH-quinone oxidoreductase subunit H (336 aa).

8 helical membrane-spanning segments follow: residues 14-34, 82-102, 115-135, 161-181, 186-206, 247-267, 273-293, and 312-332; these read IIVA…AFLV, IIFL…WAVI, VGIL…IMAG, IGLV…SDVV, TVWF…SALA, ILMS…PLDV, VPGP…FVWV, and VFLP…VTFD.

It belongs to the complex I subunit 1 family. NDH-1 is composed of 14 different subunits. Subunits NuoA, H, J, K, L, M, N constitute the membrane sector of the complex.

The protein localises to the cell inner membrane. It catalyses the reaction a quinone + NADH + 5 H(+)(in) = a quinol + NAD(+) + 4 H(+)(out). Its function is as follows. NDH-1 shuttles electrons from NADH, via FMN and iron-sulfur (Fe-S) centers, to quinones in the respiratory chain. The immediate electron acceptor for the enzyme in this species is believed to be ubiquinone. Couples the redox reaction to proton translocation (for every two electrons transferred, four hydrogen ions are translocated across the cytoplasmic membrane), and thus conserves the redox energy in a proton gradient. This subunit may bind ubiquinone. The sequence is that of NADH-quinone oxidoreductase subunit H from Rhodospirillum centenum (strain ATCC 51521 / SW).